The primary structure comprises 249 residues: uncharacterized protein (249 aa).

His10, His12, Glu95, His129, His150, and Asp198 together coordinate a divalent metal cation.

This sequence belongs to the metallo-dependent hydrolases superfamily. TatD-type hydrolase family. A divalent metal cation is required as a cofactor.

This is an uncharacterized protein from Methanocaldococcus jannaschii (strain ATCC 43067 / DSM 2661 / JAL-1 / JCM 10045 / NBRC 100440) (Methanococcus jannaschii).